Reading from the N-terminus, the 109-residue chain is Thiosulfate sulfurtransferase GlpE (109 aa).

Residues 16-104 (RSNGAVVVDI…WRATFPSETA (89 aa)) enclose the Rhodanese domain. Cysteine 64 acts as the Cysteine persulfide intermediate in catalysis.

The protein belongs to the GlpE family.

Its subcellular location is the cytoplasm. The enzyme catalyses thiosulfate + hydrogen cyanide = thiocyanate + sulfite + 2 H(+). It catalyses the reaction thiosulfate + [thioredoxin]-dithiol = [thioredoxin]-disulfide + hydrogen sulfide + sulfite + 2 H(+). In terms of biological role, transferase that catalyzes the transfer of sulfur from thiosulfate to thiophilic acceptors such as cyanide or dithiols. May function in a CysM-independent thiosulfate assimilation pathway by catalyzing the conversion of thiosulfate to sulfite, which can then be used for L-cysteine biosynthesis. The protein is Thiosulfate sulfurtransferase GlpE of Ectopseudomonas mendocina (strain ymp) (Pseudomonas mendocina).